We begin with the raw amino-acid sequence, 188 residues long: ATP-dependent protease subunit HslV (188 aa).

The active site involves Thr-8. Na(+) is bound by residues Ala-165, Cys-168, and Thr-171.

This sequence belongs to the peptidase T1B family. HslV subfamily. In terms of assembly, a double ring-shaped homohexamer of HslV is capped on each side by a ring-shaped HslU homohexamer. The assembly of the HslU/HslV complex is dependent on binding of ATP.

It is found in the cytoplasm. It carries out the reaction ATP-dependent cleavage of peptide bonds with broad specificity.. Allosterically activated by HslU binding. Protease subunit of a proteasome-like degradation complex believed to be a general protein degrading machinery. This is ATP-dependent protease subunit HslV from Neorickettsia sennetsu (strain ATCC VR-367 / Miyayama) (Ehrlichia sennetsu).